The primary structure comprises 406 residues: MIFPSVKEQLDIIVNNTVEVISTDELERKLTKSLKNGTPLKIKLGADPSRPDLHLGHSVVLRKLREFQDLGHEAILIIGDFTAMIGDPSGKSKTRPQLTAEEARENGKSYFEQASKILDPEKTTICYNADWLSQMHFADVIRLSSHYTVARMLERDDFEKRYRSQTPISIHEFLYPLAQGMDSVHLKNDVELGGTDQKFNLLVGRDLQREYGIEPQVCITMPLLVGTDGSEKMSKSLGNAICFNDTPEDMYGRTLSIPDSLIETYWNLLVPHHSGNDKPIAERIAADPRETKRELARELVAQYYSAEEAAKAQEHFDRVIVNKQAPTDLPTVEFEEATMPVVELLMALAAFPSKNEARRMIQQGAVQAGNEKISDINAVIELTENPVIIRAGKRKFFKVARAKKSF.

The short motif at 48–57 is the 'HIGH' region element; the sequence is PSRPDLHLGH. The short motif at 232–236 is the 'KMSKS' region element; that stretch reads KMSKS. Lysine 235 provides a ligand contact to ATP. The S4 RNA-binding domain maps to 339-401; sequence MPVVELLMAL…GKRKFFKVAR (63 aa).

It belongs to the class-I aminoacyl-tRNA synthetase family. TyrS type 2 subfamily. In terms of assembly, homodimer.

It localises to the cytoplasm. The enzyme catalyses tRNA(Tyr) + L-tyrosine + ATP = L-tyrosyl-tRNA(Tyr) + AMP + diphosphate + H(+). Functionally, catalyzes the attachment of tyrosine to tRNA(Tyr) in a two-step reaction: tyrosine is first activated by ATP to form Tyr-AMP and then transferred to the acceptor end of tRNA(Tyr). The protein is Tyrosine--tRNA ligase of Chlorobaculum tepidum (strain ATCC 49652 / DSM 12025 / NBRC 103806 / TLS) (Chlorobium tepidum).